Here is a 403-residue protein sequence, read N- to C-terminus: Phosphopentomutase (403 aa).

Residues aspartate 13, aspartate 298, histidine 303, aspartate 339, histidine 340, and histidine 351 each coordinate Mn(2+).

Belongs to the phosphopentomutase family. Requires Mn(2+) as cofactor.

The protein localises to the cytoplasm. It carries out the reaction 2-deoxy-alpha-D-ribose 1-phosphate = 2-deoxy-D-ribose 5-phosphate. The catalysed reaction is alpha-D-ribose 1-phosphate = D-ribose 5-phosphate. It participates in carbohydrate degradation; 2-deoxy-D-ribose 1-phosphate degradation; D-glyceraldehyde 3-phosphate and acetaldehyde from 2-deoxy-alpha-D-ribose 1-phosphate: step 1/2. Isomerase that catalyzes the conversion of deoxy-ribose 1-phosphate (dRib-1-P) and ribose 1-phosphate (Rib-1-P) to deoxy-ribose 5-phosphate (dRib-5-P) and ribose 5-phosphate (Rib-5-P), respectively. The polypeptide is Phosphopentomutase (Streptococcus pneumoniae (strain Hungary19A-6)).